Consider the following 198-residue polypeptide: Lipoprotein signal peptidase (198 aa).

Residues 1–34 (MDDERVSQDPTAENETDAEDRNDDDPSGSAPPQP) are disordered. Residues 12-26 (AENETDAEDRNDDDP) are compositionally biased toward acidic residues. 3 consecutive transmembrane segments (helical) span residues 42 to 62 (LLFVIAGVVLATDLLTKILAV), 92 to 112 (MATGMTWLLTLVAVGVVIGVV), and 120 to 140 (SPWWALGLGLVLGGALGNLVD). Residues Asp-155 and Asp-169 contribute to the active site. Residues 167–187 (VADSGIVCGAILLVVLTLIGL) traverse the membrane as a helical segment.

The protein belongs to the peptidase A8 family.

The protein localises to the cell membrane. The enzyme catalyses Release of signal peptides from bacterial membrane prolipoproteins. Hydrolyzes -Xaa-Yaa-Zaa-|-(S,diacylglyceryl)Cys-, in which Xaa is hydrophobic (preferably Leu), and Yaa (Ala or Ser) and Zaa (Gly or Ala) have small, neutral side chains.. It functions in the pathway protein modification; lipoprotein biosynthesis (signal peptide cleavage). Its function is as follows. This protein specifically catalyzes the removal of signal peptides from prolipoproteins. The chain is Lipoprotein signal peptidase from Rhodococcus jostii (strain RHA1).